A 96-amino-acid polypeptide reads, in one-letter code: Dynein light chain roadblock-type 1 (96 aa).

Residue Ala2 is modified to N-acetylalanine.

This sequence belongs to the GAMAD family. In terms of assembly, homodimer. The cytoplasmic dynein 1 complex consists of two catalytic heavy chains (HCs) and a number of non-catalytic subunits presented by intermediate chains (ICs), light intermediate chains (LICs) and light chains (LCs); the composition seems to vary in respect to the IC, LIC and LC composition. The heavy chain homodimer serves as a scaffold for the probable homodimeric assembly of the respective non-catalytic subunits. The ICs and LICs bind directly to the HC dimer and the LCs assemble on the IC dimer. Interacts with DYNLRB2. Interacts with DYNC1I1 and DYNC1I2. Interacts with RAB6A isoform 1 (GTP-bound); the interaction is direct. Interacts with RAB6A isoform 2 (GDP-bound); the interaction is direct. Interacts with RAB6B (GDP-bound). As to expression, high expression in heart, liver, brain and pancreas; moderate in placenta, skeletal muscle and kidney; low in lung, prostate, testis, small intestine and colon. Isoform 1 expression is up-regulated in 64% hepatocellular carcinoma (HCC) patients.

It localises to the cytoplasm. Its subcellular location is the cytoskeleton. Functionally, acts as one of several non-catalytic accessory components of the cytoplasmic dynein 1 complex that are thought to be involved in linking dynein to cargos and to adapter proteins that regulate dynein function. Cytoplasmic dynein 1 acts as a motor for the intracellular retrograde motility of vesicles and organelles along microtubules. This chain is Dynein light chain roadblock-type 1, found in Homo sapiens (Human).